Reading from the N-terminus, the 373-residue chain is 4-hydroxy-3-methylbut-2-en-1-yl diphosphate synthase (flavodoxin) (373 aa).

Cysteine 270, cysteine 273, cysteine 305, and glutamate 312 together coordinate [4Fe-4S] cluster.

This sequence belongs to the IspG family. [4Fe-4S] cluster is required as a cofactor.

It catalyses the reaction (2E)-4-hydroxy-3-methylbut-2-enyl diphosphate + oxidized [flavodoxin] + H2O + 2 H(+) = 2-C-methyl-D-erythritol 2,4-cyclic diphosphate + reduced [flavodoxin]. The protein operates within isoprenoid biosynthesis; isopentenyl diphosphate biosynthesis via DXP pathway; isopentenyl diphosphate from 1-deoxy-D-xylulose 5-phosphate: step 5/6. Functionally, converts 2C-methyl-D-erythritol 2,4-cyclodiphosphate (ME-2,4cPP) into 1-hydroxy-2-methyl-2-(E)-butenyl 4-diphosphate. This chain is 4-hydroxy-3-methylbut-2-en-1-yl diphosphate synthase (flavodoxin), found in Photobacterium profundum (strain SS9).